Reading from the N-terminus, the 128-residue chain is Large ribosomal subunit protein eL31 (128 aa).

It belongs to the eukaryotic ribosomal protein eL31 family.

This chain is Large ribosomal subunit protein eL31 (RpL31), found in Drosophila virilis (Fruit fly).